The following is a 555-amino-acid chain: Inositol 1,4,5-trisphosphate receptor-interacting protein-like 1 (555 aa).

Residues 1 to 24 (MNVDAEASMAVISLLFLAVMYVVH) form the signal peptide. At 25-103 (HPLMVSDRMD…WPFQADGQEG (79 aa)) the chain is on the extracellular side. The stretch at 38 to 74 (LARSRQLEKRMSEEMRLLEMEFEERKRAAEQRQKAEN) forms a coiled coil. Residues 104 to 124 (PLGWMLGNLWNTGLFCLFLVF) form a helical membrane-spanning segment. Residues 125–555 (ELLRQNMQHE…LPHAPLAAAP (431 aa)) are Cytoplasmic-facing.

The protein belongs to the ITPRIP family. In terms of tissue distribution, expressed in testis and tumoral cells.

The protein resides in the cell membrane. In terms of biological role, functions as a ligand of CD3E, inhibiting TCR-CD3 complex signaling to regulate T cell activation. Induces stable CD3E-NCK1 binding, thereby preventing the CD3E-ZAP70 interaction and subsequently inhibiting the activation of the downstream ERK-NFkB signaling cascade and calcium influx. The sequence is that of Inositol 1,4,5-trisphosphate receptor-interacting protein-like 1 from Homo sapiens (Human).